The sequence spans 442 residues: C4-dicarboxylate transport protein (442 aa).

Transmembrane regions (helical) follow at residues 19-39 (QLYFQVVVAIVAGVLLGHFEP), 55-75 (LVKMIIAPVIFLTIVTGIAGM), 90-110 (AYFLFFSTLALVVGMVVAHVV), 161-181 (ILQVLFVAVLFGISLAMVGDA), 199-219 (LVGILMKAAPLGAFGAIAFTI), 232-252 (WLVGSFYITSLLFVVVVLGFV), 318-338 (IYMTLAALFIAQATNTHLTLG), and 366-386 (AATLAVVPEVPVAGMALILGV).

This sequence belongs to the dicarboxylate/amino acid:cation symporter (DAACS) (TC 2.A.23) family.

It is found in the cell inner membrane. In terms of biological role, responsible for the transport of dicarboxylates such as succinate, fumarate, and malate from the periplasm across the membrane. The sequence is that of C4-dicarboxylate transport protein from Delftia acidovorans (strain DSM 14801 / SPH-1).